The chain runs to 389 residues: Mitochondrial tRNA-specific 2-thiouridylase 1 (389 aa).

ATP is bound by residues 8 to 15 (GVSGGVDS) and methionine 34. The interval 94–96 (NPD) is interaction with target base in tRNA. The active-site Nucleophile is the cysteine 99. A disulfide bridge links cysteine 99 with cysteine 205. Position 124 (glycine 124) interacts with ATP. Positions 154 to 156 (KDQ) are interaction with tRNA. Cysteine 205 functions as the Cysteine persulfide intermediate in the catalytic mechanism. The segment at 317 to 318 (QH) is interaction with tRNA.

This sequence belongs to the MnmA/TRMU family.

The protein resides in the mitochondrion. It carries out the reaction 5-taurinomethyluridine(34) in tRNA + S-sulfanyl-L-cysteinyl-[protein] + AH2 + ATP = 5-taurinomethyl-2-thiouridine(34) in tRNA + L-cysteinyl-[protein] + A + AMP + diphosphate + H(+). Catalyzes the 2-thiolation of uridine at the wobble position (U34) of mitochondrial tRNA(Lys), tRNA(Glu) and tRNA(Gln). Required for the formation of 5-taurinomethyl-2-thiouridine (tm5s2U) of mitochondrial tRNA(Lys), tRNA(Glu), and tRNA(Gln) at the wobble position. ATP is required to activate the C2 atom of the wobble base. This is Mitochondrial tRNA-specific 2-thiouridylase 1 from Drosophila melanogaster (Fruit fly).